A 374-amino-acid chain; its full sequence is Eukaryotic translation initiation factor 3 subunit M (374 aa).

Serine 2 bears the N-acetylserine mark. Phosphoserine occurs at positions 2 and 152. The PCI domain occupies 180 to 339; that stretch reads AASKVMVELL…RKVVVSHSTH (160 aa). Lysine 254 is modified (N6-acetyllysine). Serine 367 carries the post-translational modification Phosphoserine.

It belongs to the eIF-3 subunit M family. As to quaternary structure, component of the eukaryotic translation initiation factor 3 (eIF-3) complex, which is composed of 13 subunits: EIF3A, EIF3B, EIF3C, EIF3D, EIF3E, EIF3F, EIF3G, EIF3H, EIF3I, EIF3J, EIF3K, EIF3L and EIF3M. The eIF-3 complex appears to include 3 stable modules: module A is composed of EIF3A, EIF3B, EIF3G and EIF3I; module B is composed of EIF3F, EIF3H, and EIF3M; and module C is composed of EIF3C, EIF3D, EIF3E, EIF3K and EIF3L. EIF3C of module C binds EIF3B of module A and EIF3H of module B, thereby linking the three modules. EIF3J is a labile subunit that binds to the eIF-3 complex via EIF3B. The eIF-3 complex interacts with RPS6KB1 under conditions of nutrient depletion. Mitogenic stimulation leads to binding and activation of a complex composed of MTOR and RPTOR, leading to phosphorylation and release of RPS6KB1 and binding of EIF4B to eIF-3.

The protein resides in the cytoplasm. In terms of biological role, component of the eukaryotic translation initiation factor 3 (eIF-3) complex, which is required for several steps in the initiation of protein synthesis. The eIF-3 complex associates with the 40S ribosome and facilitates the recruitment of eIF-1, eIF-1A, eIF-2:GTP:methionyl-tRNAi and eIF-5 to form the 43S pre-initiation complex (43S PIC). The eIF-3 complex stimulates mRNA recruitment to the 43S PIC and scanning of the mRNA for AUG recognition. The eIF-3 complex is also required for disassembly and recycling of post-termination ribosomal complexes and subsequently prevents premature joining of the 40S and 60S ribosomal subunits prior to initiation. The eIF-3 complex specifically targets and initiates translation of a subset of mRNAs involved in cell proliferation, including cell cycling, differentiation and apoptosis, and uses different modes of RNA stem-loop binding to exert either translational activation or repression. In Mus musculus (Mouse), this protein is Eukaryotic translation initiation factor 3 subunit M (Eif3m).